Reading from the N-terminus, the 332-residue chain is Probable cation efflux system protein MT2084 (332 aa).

5 helical membrane passes run 46–66, 75–95, 113–133, 145–165, and 202–222; these read ISLLVLGLTALIQIVIVVMSG, IHNFADALTAVPLWIAFALGA, AGSFVVAMITMSAIIAGYEAI, VGWVALAGLVGFIGNEWVALY, and VALGFPLADPIVGLLITAAIL.

It belongs to the cation diffusion facilitator (CDF) transporter (TC 2.A.4) family.

Its subcellular location is the cell membrane. The protein is Probable cation efflux system protein MT2084 of Mycobacterium tuberculosis (strain CDC 1551 / Oshkosh).